An 887-amino-acid polypeptide reads, in one-letter code: MQSTNDIRRSFLDYFTGAGHAEIASAPLVPYNDPTLMFVNAGMVPFKNVFTGLETPPAPTATSSQKCVRAGGKHNDLDNVGYTARHHTFFEMLGNFSFGDYFKEQAIEHAWTLLTREWGIDAARLTATVYHTDDEAYDFWRKIAGLPEERIIRIATKDNFWAMGDDGPCGPCSEIFFDHGDHIFGGPPGSPEEDGDRFVEVWNLVFMQHEQTGGEITGDLPNKNIDTGMGLERIAAVMQGVHDNYDTDTFKELIGASEGLTGVKAEGDQAASHRVIADHLRSTSFLIADGVLPSSEGRGYVLRRIMRRAMRHAHLLGASEPLMHRLVPALVTEMGQAYPELTRGQALIEETLEREEARFRQTLEKGLRLLDDATGDMSEGDTLDGETAFKLYDTYGFPYDLTEDALRPRGIAVDETGFASAMQRQKDAARAAWKGSGQAADSEVWFDIAEREGATEFTGYTSTSGEGRVVALVKNGKEVDSASAGDEVVILTNQTPFYGESGGQTGDAGTMSTPDGVKVEVTDTGKPLGRLHTHQAKIQSGTVLKGDTLHLDVDVDRRDRVRANHSATHLVHAALRNRLGEHVTQKGSLVAEDRLRFDFSHPKPLSEDDIAAIEAEVNEEIRANETVTTRLMSPDDAVDAGALALFGEKYGEEVRVLSMGRRSKEGRNYSVELCGGTHVRATGDIQLFRIISESAVSSGVRRIEALTGDAARQWLVRREEALKSAASALRTNPEEVAERVAALLDERKALEKELADARKQLALGGGGSQVAQSQDETIGDVTFSGQVINGLNPKDLRGLLDEAKQRMGSGIAAICAVNEGKAAFAAAVTDDLTDRYNAVDLVRAGVEVLGGKGGGGRPDMAQGGGPDGLKAEAALNAVRERLASAAA.

Residues histidine 565, histidine 569, cysteine 674, and histidine 678 each coordinate Zn(2+).

The protein belongs to the class-II aminoacyl-tRNA synthetase family. Zn(2+) is required as a cofactor.

It localises to the cytoplasm. The catalysed reaction is tRNA(Ala) + L-alanine + ATP = L-alanyl-tRNA(Ala) + AMP + diphosphate. Catalyzes the attachment of alanine to tRNA(Ala) in a two-step reaction: alanine is first activated by ATP to form Ala-AMP and then transferred to the acceptor end of tRNA(Ala). Also edits incorrectly charged Ser-tRNA(Ala) and Gly-tRNA(Ala) via its editing domain. The chain is Alanine--tRNA ligase from Erythrobacter litoralis (strain HTCC2594).